Reading from the N-terminus, the 150-residue chain is 6,7-dimethyl-8-ribityllumazine synthase (150 aa).

5-amino-6-(D-ribitylamino)uracil is bound by residues Phe11, 43–45 (VYD), and 67–69 (AVI). A (2S)-2-hydroxy-3-oxobutyl phosphate-binding site is contributed by 72 to 73 (AT). The Proton donor role is filled by His75. Leu100 is a 5-amino-6-(D-ribitylamino)uracil binding site. Residue Arg115 coordinates (2S)-2-hydroxy-3-oxobutyl phosphate.

The protein belongs to the DMRL synthase family.

It carries out the reaction (2S)-2-hydroxy-3-oxobutyl phosphate + 5-amino-6-(D-ribitylamino)uracil = 6,7-dimethyl-8-(1-D-ribityl)lumazine + phosphate + 2 H2O + H(+). The protein operates within cofactor biosynthesis; riboflavin biosynthesis; riboflavin from 2-hydroxy-3-oxobutyl phosphate and 5-amino-6-(D-ribitylamino)uracil: step 1/2. Functionally, catalyzes the formation of 6,7-dimethyl-8-ribityllumazine by condensation of 5-amino-6-(D-ribitylamino)uracil with 3,4-dihydroxy-2-butanone 4-phosphate. This is the penultimate step in the biosynthesis of riboflavin. In Pyrobaculum arsenaticum (strain DSM 13514 / JCM 11321 / PZ6), this protein is 6,7-dimethyl-8-ribityllumazine synthase.